We begin with the raw amino-acid sequence, 224 residues long: Ribosomal RNA large subunit methyltransferase E (224 aa).

Positions 64, 66, 97, 113, and 138 each coordinate S-adenosyl-L-methionine. Lys-178 (proton acceptor) is an active-site residue.

The protein belongs to the class I-like SAM-binding methyltransferase superfamily. RNA methyltransferase RlmE family.

It localises to the cytoplasm. It catalyses the reaction uridine(2552) in 23S rRNA + S-adenosyl-L-methionine = 2'-O-methyluridine(2552) in 23S rRNA + S-adenosyl-L-homocysteine + H(+). Specifically methylates the uridine in position 2552 of 23S rRNA at the 2'-O position of the ribose in the fully assembled 50S ribosomal subunit. This chain is Ribosomal RNA large subunit methyltransferase E, found in Methylibium petroleiphilum (strain ATCC BAA-1232 / LMG 22953 / PM1).